Reading from the N-terminus, the 292-residue chain is NAD kinase (292 aa).

Catalysis depends on D73, which acts as the Proton acceptor. NAD(+)-binding positions include 73-74 (DG), 147-148 (NE), H158, R175, D177, 188-193 (TAYSLS), and Q247.

This sequence belongs to the NAD kinase family. The cofactor is a divalent metal cation.

The protein resides in the cytoplasm. It carries out the reaction NAD(+) + ATP = ADP + NADP(+) + H(+). Functionally, involved in the regulation of the intracellular balance of NAD and NADP, and is a key enzyme in the biosynthesis of NADP. Catalyzes specifically the phosphorylation on 2'-hydroxyl of the adenosine moiety of NAD to yield NADP. The sequence is that of NAD kinase from Erwinia tasmaniensis (strain DSM 17950 / CFBP 7177 / CIP 109463 / NCPPB 4357 / Et1/99).